The chain runs to 551 residues: Dihydroxy-acid dehydratase (551 aa).

Mg(2+) is bound at residue D78. C119 provides a ligand contact to [2Fe-2S] cluster. Mg(2+)-binding residues include D120 and K121. K121 is subject to N6-carboxylysine. Residue C191 coordinates [2Fe-2S] cluster. E441 contacts Mg(2+). The active-site Proton acceptor is the S467.

It belongs to the IlvD/Edd family. As to quaternary structure, homodimer. [2Fe-2S] cluster is required as a cofactor. Mg(2+) serves as cofactor.

It catalyses the reaction (2R)-2,3-dihydroxy-3-methylbutanoate = 3-methyl-2-oxobutanoate + H2O. The catalysed reaction is (2R,3R)-2,3-dihydroxy-3-methylpentanoate = (S)-3-methyl-2-oxopentanoate + H2O. It functions in the pathway amino-acid biosynthesis; L-isoleucine biosynthesis; L-isoleucine from 2-oxobutanoate: step 3/4. It participates in amino-acid biosynthesis; L-valine biosynthesis; L-valine from pyruvate: step 3/4. Functions in the biosynthesis of branched-chain amino acids. Catalyzes the dehydration of (2R,3R)-2,3-dihydroxy-3-methylpentanoate (2,3-dihydroxy-3-methylvalerate) into 2-oxo-3-methylpentanoate (2-oxo-3-methylvalerate) and of (2R)-2,3-dihydroxy-3-methylbutanoate (2,3-dihydroxyisovalerate) into 2-oxo-3-methylbutanoate (2-oxoisovalerate), the penultimate precursor to L-isoleucine and L-valine, respectively. The sequence is that of Dihydroxy-acid dehydratase from Pyrococcus furiosus (strain ATCC 43587 / DSM 3638 / JCM 8422 / Vc1).